A 336-amino-acid chain; its full sequence is D-altritol 5-dehydrogenase (336 aa).

Zn(2+)-binding residues include cysteine 37, histidine 59, glutamate 60, cysteine 89, cysteine 92, cysteine 95, and cysteine 103.

This sequence belongs to the zinc-containing alcohol dehydrogenase family. It depends on Zn(2+) as a cofactor.

The catalysed reaction is D-altritol + NAD(+) = keto-D-tagatose + NADH + H(+). The protein operates within carbohydrate metabolism. Functionally, involved in D-altritol catabolism. Catalyzes the oxidation of D-altritol to D-tagatose. This Agrobacterium fabrum (strain C58 / ATCC 33970) (Agrobacterium tumefaciens (strain C58)) protein is D-altritol 5-dehydrogenase.